The chain runs to 102 residues: Small ubiquitin-related modifier 1 (102 aa).

Positions 21 to 98 constitute a Ubiquitin-like domain; the sequence is DYIKLKVIGQ…IEVYQEQTGG (78 aa). Gly98 participates in a covalent cross-link: Glycyl lysine isopeptide (Gly-Lys) (interchain with K-? in acceptor proteins). The propeptide occupies 99–102; the sequence is HSTI.

This sequence belongs to the ubiquitin family. SUMO subfamily. As to quaternary structure, interacts with sae2, ube2i, ranbp2, pias1 and pias2. Interacts with sox9 and sox10. Covalently attached to a number of proteins. Post-translationally, cleavage of precursor form by a sentrin-specific protease is necessary for function.

The protein resides in the nucleus membrane. It is found in the nucleus speckle. The protein localises to the cytoplasm. It localises to the nucleus. Its subcellular location is the PML body. The protein resides in the cell membrane. Functionally, ubiquitin-like protein that can be covalently attached to proteins as a monomer or a lysine-linked polymer. Covalent attachment via an isopeptide bond to its substrates requires prior activation by the E1 complex sae1-sae2 and linkage to the E2 enzyme ube2i. This post-translational modification on lysine residues of proteins plays a crucial role in a number of cellular processes such as nuclear transport, DNA replication and repair, mitosis and signal transduction. Polymeric sumo1 chains are also susceptible to polyubiquitination which functions as a signal for proteasomal degradation of modified proteins. The sequence is that of Small ubiquitin-related modifier 1 (sumo1) from Xenopus tropicalis (Western clawed frog).